A 424-amino-acid polypeptide reads, in one-letter code: SWI/SNF and RSC complexes subunit arp42 (424 aa).

Belongs to the actin family. As to quaternary structure, component of the RSC complex composed of at least arp9, arp42, rsc1, rsc4, rsc7, rsc9, rsc58, sfh1, snf21, ssr1, ssr2, ssr3 and ssr4. The complex interacts with histone and histone variant components of centromeric chromatin. Component of the SWI/SNF global transcription activator complex composed of at least arp9, arp42, snf5, snf22, snf30, sbf59, sol1, ssr1, ssr2, ssr3, ssr4 and tfg3.

The protein localises to the cytoplasm. It is found in the nucleus. Component of the chromatin structure remodeling complex (RSC), which is involved in transcription regulation and nucleosome positioning. Controls particularly membrane and organelle development genes. Part of the SWI/SNF complex, an ATP-dependent chromatin remodeling complex, required for the positive and negative regulation of gene expression of a large number of genes. It changes chromatin structure by altering DNA-histone contacts within a nucleosome, leading eventually to a change in nucleosome position, thus facilitating or repressing binding of gene-specific transcription factors. The chain is SWI/SNF and RSC complexes subunit arp42 (arp42) from Schizosaccharomyces pombe (strain 972 / ATCC 24843) (Fission yeast).